We begin with the raw amino-acid sequence, 289 residues long: Ribosomal protein L11 methyltransferase (289 aa).

S-adenosyl-L-methionine is bound by residues Thr-142, Gly-163, Asp-185, and Asn-226.

This sequence belongs to the methyltransferase superfamily. PrmA family.

The protein localises to the cytoplasm. It carries out the reaction L-lysyl-[protein] + 3 S-adenosyl-L-methionine = N(6),N(6),N(6)-trimethyl-L-lysyl-[protein] + 3 S-adenosyl-L-homocysteine + 3 H(+). In terms of biological role, methylates ribosomal protein L11. This is Ribosomal protein L11 methyltransferase from Legionella pneumophila subsp. pneumophila (strain Philadelphia 1 / ATCC 33152 / DSM 7513).